We begin with the raw amino-acid sequence, 227 residues long: Cytidylate kinase (227 aa).

12–20 (GPSGAGKGT) contacts ATP.

The protein belongs to the cytidylate kinase family. Type 1 subfamily.

Its subcellular location is the cytoplasm. The enzyme catalyses CMP + ATP = CDP + ADP. It catalyses the reaction dCMP + ATP = dCDP + ADP. The sequence is that of Cytidylate kinase from Sodalis glossinidius (strain morsitans).